The primary structure comprises 226 residues: ATP-dependent dethiobiotin synthetase BioD (226 aa).

12–17 (EVGKTV) contacts ATP. A Mg(2+)-binding site is contributed by Thr-16. Lys-39 is a catalytic residue. A substrate-binding site is contributed by Thr-43. Residues Asp-47, 108-111 (EALG), 168-169 (NC), and 200-202 (PYI) contribute to the ATP site. Mg(2+)-binding residues include Asp-47 and Glu-108.

Belongs to the dethiobiotin synthetase family. As to quaternary structure, homodimer. The cofactor is Mg(2+).

It localises to the cytoplasm. It carries out the reaction (7R,8S)-7,8-diammoniononanoate + CO2 + ATP = (4R,5S)-dethiobiotin + ADP + phosphate + 3 H(+). The catalysed reaction is (7R,8S)-8-amino-7-(carboxyamino)nonanoate + ATP = (4R,5S)-dethiobiotin + ADP + phosphate + H(+). Its pathway is cofactor biosynthesis; biotin biosynthesis; biotin from 7,8-diaminononanoate: step 1/2. Catalyzes a mechanistically unusual reaction, the ATP-dependent insertion of CO2 between the N7 and N8 nitrogen atoms of 7,8-diaminopelargonic acid (DAPA, also called 7,8-diammoniononanoate) to form a ureido ring. This cyanobacterium does not encode bioA (which catalyzes the formation of the precursor for this reaction in the cannonical pathway), instead it encodes bioU, which replaces bioA and also performs the first half of the cannonical BioD reaction. Thus in this organism BioD has a different substrate. This is ATP-dependent dethiobiotin synthetase BioD from Gloeothece citriformis (strain PCC 7424) (Cyanothece sp. (strain PCC 7424)).